The sequence spans 148 residues: MCCKAILSFCILSSLGNALYFGSHRPQYLREVGQRQYPFEPQAFGMLPVPQQPMGPQPMGPQPMEPQPLPMGPQSPQMQVPDRSCSGCVININCGGRECLPTRPTQTQPTQPSWTVETPPTPTPGASQGCRVCACYVPPPCQICQPCQ.

Positions 1-18 (MCCKAILSFCILSSLGNA) are cleaved as a signal peptide. Residues 19 to 43 (LYFGSHRPQYLREVGQRQYPFEPQA) constitute a propeptide, removed in mature form. 5 consecutive repeats follow at residues 46 to 50 (MLPVP), 54 to 58 (MGPQP), 59 to 63 (MGPQP), 64 to 68 (MEPQP), and 71 to 75 (MGPQS). Residues 46–75 (MLPVPQQPMGPQPMGPQPMEPQPLPMGPQS) form a repeat-rich region region. The segment covering 52-73 (QPMGPQPMGPQPMEPQPLPMGP) has biased composition (pro residues). The interval 52–80 (QPMGPQPMGPQPMEPQPLPMGPQSPQMQV) is disordered.

It to B.pahangi filarial sheath protein. O-glycosylated.

The sequence is that of Major microfilarial sheath protein (GP22) from Litomosoides carinii.